Consider the following 190-residue polypeptide: Glutathione peroxidase 2 (190 aa).

Residue selenocysteine 40 is part of the active site. Position 40 (selenocysteine 40) is a non-standard amino acid, selenocysteine.

This sequence belongs to the glutathione peroxidase family. In terms of assembly, homotetramer.

The protein resides in the cytoplasm. It is found in the cytosol. The catalysed reaction is 2 glutathione + H2O2 = glutathione disulfide + 2 H2O. It catalyses the reaction a hydroperoxy polyunsaturated fatty acid + 2 glutathione = a hydroxy polyunsaturated fatty acid + glutathione disulfide + H2O. The enzyme catalyses tert-butyl hydroperoxide + 2 glutathione = tert-butanol + glutathione disulfide + H2O. It carries out the reaction cumene hydroperoxide + 2 glutathione = 2-phenylpropan-2-ol + glutathione disulfide + H2O. The catalysed reaction is (13S)-hydroperoxy-(9Z,11E)-octadecadienoate + 2 glutathione = (13S)-hydroxy-(9Z,11E)-octadecadienoate + glutathione disulfide + H2O. It catalyses the reaction (5S)-hydroperoxy-(6E,8Z,11Z,14Z)-eicosatetraenoate + 2 glutathione = (5S)-hydroxy-(6E,8Z,11Z,14Z)-eicosatetraenoate + glutathione disulfide + H2O. The enzyme catalyses (12R)-hydroperoxy-(5Z,8Z,10E,14Z)-eicosatetraenoate + 2 glutathione = (12R)-hydroxy-(5Z,8Z,10E,14Z)-eicosatetraenoate + glutathione disulfide + H2O. It carries out the reaction (15S)-hydroperoxy-(5Z,8Z,11Z,13E)-eicosatetraenoate + 2 glutathione = (15S)-hydroxy-(5Z,8Z,11Z,13E)-eicosatetraenoate + glutathione disulfide + H2O. Its function is as follows. Catalyzes the reduction of hydroperoxides in a glutathione-dependent manner thus regulating cellular redox homeostasis. Can reduce small soluble hydroperoxides such as H2O2, cumene hydroperoxide and tert-butyl hydroperoxide, as well as several fatty acid-derived hydroperoxides. Cannot reduce phosphatidycholine hydroperoxide. In Sapajus apella (Brown-capped capuchin), this protein is Glutathione peroxidase 2 (GPX2).